The primary structure comprises 487 residues: Putative B3 domain-containing protein At1g78640 (487 aa).

DNA-binding regions (TF-B3) lie at residues R171–T269 and R379–V474.

It is found in the nucleus. The chain is Putative B3 domain-containing protein At1g78640 from Arabidopsis thaliana (Mouse-ear cress).